A 354-amino-acid polypeptide reads, in one-letter code: Serum paraoxonase/lactonase 3 (354 aa).

A disulfide bridge connects residues C42 and C352. The N-linked (GlcNAc...) asparagine glycan is linked to N50. The Ca(2+) site is built by E53 and D54. The active-site Proton acceptor is H114. Ca(2+) is bound at residue I116. A Phosphoserine modification is found at S165. N167, D168, N223, D268, and N269 together coordinate Ca(2+). 2 N-linked (GlcNAc...) asparagine glycosylation sites follow: N269 and N323.

Belongs to the paraoxonase family. Homodimer. Ca(2+) serves as cofactor. In terms of processing, glycosylated. The signal sequence is not cleaved.

It is found in the secreted. The protein localises to the extracellular space. It catalyses the reaction a phenyl acetate + H2O = a phenol + acetate + H(+). The enzyme catalyses An aryl dialkyl phosphate + H2O = dialkyl phosphate + an aryl alcohol.. It carries out the reaction an N-acyl-L-homoserine lactone + H2O = an N-acyl-L-homoserine + H(+). In terms of biological role, has low activity towards the organophosphate paraxon and aromatic carboxylic acid esters. Rapidly hydrolyzes lactones such as statin prodrugs (e.g. lovastatin). Hydrolyzes aromatic lactones and 5- or 6-member ring lactones with aliphatic substituents but not simple lactones or those with polar substituents. The polypeptide is Serum paraoxonase/lactonase 3 (Pon3) (Rattus norvegicus (Rat)).